The following is a 129-amino-acid chain: Large ribosomal subunit protein eL32 (129 aa).

It belongs to the eukaryotic ribosomal protein eL32 family.

The chain is Large ribosomal subunit protein eL32 (rpl32e) from Archaeoglobus fulgidus (strain ATCC 49558 / DSM 4304 / JCM 9628 / NBRC 100126 / VC-16).